The primary structure comprises 412 residues: CCA-adding enzyme (412 aa).

Residues Gly-8 and Arg-11 each contribute to the ATP site. Residues Gly-8 and Arg-11 each contribute to the CTP site. Mg(2+)-binding residues include Asp-21 and Asp-23. Positions 91, 137, and 140 each coordinate ATP. CTP-binding residues include Arg-91, Arg-137, and Arg-140.

It belongs to the tRNA nucleotidyltransferase/poly(A) polymerase family. Bacterial CCA-adding enzyme type 2 subfamily. The cofactor is Mg(2+).

It carries out the reaction a tRNA precursor + 2 CTP + ATP = a tRNA with a 3' CCA end + 3 diphosphate. It catalyses the reaction a tRNA with a 3' CCA end + 2 CTP + ATP = a tRNA with a 3' CCACCA end + 3 diphosphate. Functionally, catalyzes the addition and repair of the essential 3'-terminal CCA sequence in tRNAs without using a nucleic acid template. Adds these three nucleotides in the order of C, C, and A to the tRNA nucleotide-73, using CTP and ATP as substrates and producing inorganic pyrophosphate. tRNA 3'-terminal CCA addition is required both for tRNA processing and repair. Also involved in tRNA surveillance by mediating tandem CCA addition to generate a CCACCA at the 3' terminus of unstable tRNAs. While stable tRNAs receive only 3'-terminal CCA, unstable tRNAs are marked with CCACCA and rapidly degraded. The chain is CCA-adding enzyme from Buchnera aphidicola subsp. Schizaphis graminum (strain Sg).